The primary structure comprises 156 residues: MPRRARKFKRAVAPDSRYNSLMLSNFINKLMMHGQKATAQRIVYDAIDIMGKQENKEGLAVFEQGLKNATPFIEVKPRRVGGATYQVPIEVRPDRAQTMAMRWIIKAARKRTGKSMAERLASEMLEASREQGAAVKKREETHKMAEANRAFAHYRW.

The protein belongs to the universal ribosomal protein uS7 family. Part of the 30S ribosomal subunit. Contacts proteins S9 and S11.

Functionally, one of the primary rRNA binding proteins, it binds directly to 16S rRNA where it nucleates assembly of the head domain of the 30S subunit. Is located at the subunit interface close to the decoding center, probably blocks exit of the E-site tRNA. The polypeptide is Small ribosomal subunit protein uS7 (Dehalococcoides mccartyi (strain ATCC BAA-2100 / JCM 16839 / KCTC 5957 / BAV1)).